The following is a 63-amino-acid chain: Beta-defensin 35 (63 aa).

An N-terminal signal peptide occupies residues 1–23; sequence MPQTFFVFCFLFFVFLQLFPGTG. 3 disulfide bridges follow: C31-C58, C38-C52, and C42-C59.

This sequence belongs to the beta-defensin family. As to expression, expressed in testis, epididymis (caput, corpus and cauda), kidney and neonatal and adult brain.

Its subcellular location is the secreted. Has antibacterial activity. The sequence is that of Beta-defensin 35 (Defb35) from Mus musculus (Mouse).